The primary structure comprises 49 residues: Large ribosomal subunit protein bL32 (49 aa).

This sequence belongs to the bacterial ribosomal protein bL32 family.

This is Large ribosomal subunit protein bL32 from Nautilia profundicola (strain ATCC BAA-1463 / DSM 18972 / AmH).